A 498-amino-acid chain; its full sequence is ATP synthase subunit beta, chloroplastic (498 aa).

172–179 (GGAGVGKT) is a binding site for ATP.

The protein belongs to the ATPase alpha/beta chains family. In terms of assembly, F-type ATPases have 2 components, CF(1) - the catalytic core - and CF(0) - the membrane proton channel. CF(1) has five subunits: alpha(3), beta(3), gamma(1), delta(1), epsilon(1). CF(0) has four main subunits: a(1), b(1), b'(1) and c(9-12).

The protein resides in the plastid. Its subcellular location is the chloroplast thylakoid membrane. The enzyme catalyses ATP + H2O + 4 H(+)(in) = ADP + phosphate + 5 H(+)(out). Functionally, produces ATP from ADP in the presence of a proton gradient across the membrane. The catalytic sites are hosted primarily by the beta subunits. This is ATP synthase subunit beta, chloroplastic from Platanus occidentalis (Sycamore).